A 391-amino-acid polypeptide reads, in one-letter code: Na(+)/H(+) antiporter NhaA 1 (391 aa).

11 helical membrane passes run 19–39, 56–76, 98–118, 128–148, 157–177, 180–200, 208–228, 264–284, 297–317, 335–355, and 364–384; these read FLAS…AALI, VWLG…IFFL, ALPG…YIAI, GWAI…SLLG, VFLA…IAFF, SGLN…LIAL, LLPY…SGVH, VAFA…LSGI, VALG…VLAI, GVAI…NLAF, and EVKV…ILLL.

It belongs to the NhaA Na(+)/H(+) (TC 2.A.33) antiporter family.

The protein resides in the cell inner membrane. It catalyses the reaction Na(+)(in) + 2 H(+)(out) = Na(+)(out) + 2 H(+)(in). Na(+)/H(+) antiporter that extrudes sodium in exchange for external protons. This chain is Na(+)/H(+) antiporter NhaA 1, found in Pseudomonas savastanoi pv. phaseolicola (strain 1448A / Race 6) (Pseudomonas syringae pv. phaseolicola (strain 1448A / Race 6)).